The chain runs to 247 residues: MSQVNMRDMLKAGVHFGHQTRYWNPKMGKYIFGARNKIHIINLEKTLPMFNEALTFVERLASGKNKILFVGTKRSAGKIVAEEAARCGSPYVDHRWLGGMLTNFKTIRQSIKRLRELEVQAEDGTFAKLTKKEALMRTRDLEKLDRSLGGIKDMGGLPDALFVIDVDHERIAITEANKLGIPVIGVVDTNSSPEGVDYIIPGNDDAIRAIQLYMGSMADAVIRGRNNVAGGTDVFVEEAPAAAAVEG.

The protein belongs to the universal ribosomal protein uS2 family.

The protein is Small ribosomal subunit protein uS2 of Pseudomonas syringae pv. tomato (strain ATCC BAA-871 / DC3000).